Here is a 542-residue protein sequence, read N- to C-terminus: MTKFVFVTGGVVSSLGKGIAAASLGAILESRGIKVTMLKLDPYINVDPGTMSPFQHGEVFVTDDGAETDLDLGHYERFISARMGKRNNFTTGQIYETVIKKERRGEYLGKTVQVIPHITDEIKAHVKRGAEGADVAIVEVGGTVGDIESLPFLEAIRQMGIEEGRSNTCFMHLTLLPWIPTAGELKTKPTQHSVKELREIGIQPDILLCRADRAIPEDEKRKIALFTNVPHEAVISVVDADSIYSIPRMLHDQMLDEIVCHKLNLLARAADLSSWNRIVHALKNPKHEVNVAFVGKYVDLTESYKSLTEALIHAGIHNESKVNIHYIDSEEVEKHGTGELEKMDAILVPGGFGKRGTEGKIAAIRYARESKTPYLGICLGMQLAVIEFARNVAGLKDANSTEFDPHTPHPLVGLITEWKNADGKVEQRSEDSDLGGTMRLGAQKCPIVPDTKAFTIYGAEVNERHRHRYEVNNHYVDKLEKAGLVVSARTPTEQLCEMVELPSEVHPWFVACQFHPEFTSNPRTGHPLFNAYIAAALANRKA.

The amidoligase domain stretch occupies residues 1 to 265 (MTKFVFVTGG…DEIVCHKLNL (265 aa)). Ser13 is a CTP binding site. Ser13 serves as a coordination point for UTP. Residues 14 to 19 (SLGKGI) and Asp71 contribute to the ATP site. Mg(2+) is bound by residues Asp71 and Glu139. Residues 146–148 (DIE), 186–191 (KTKPTQ), and Lys222 contribute to the CTP site. UTP contacts are provided by residues 186–191 (KTKPTQ) and Lys222. In terms of domain architecture, Glutamine amidotransferase type-1 spans 290 to 542 (NVAFVGKYVD…IAAALANRKA (253 aa)). Gly351 contributes to the L-glutamine binding site. The Nucleophile; for glutamine hydrolysis role is filled by Cys378. L-glutamine is bound by residues 379–382 (LGMQ), Glu402, and Arg468. Catalysis depends on residues His515 and Glu517.

This sequence belongs to the CTP synthase family. Homotetramer.

The catalysed reaction is UTP + L-glutamine + ATP + H2O = CTP + L-glutamate + ADP + phosphate + 2 H(+). It catalyses the reaction L-glutamine + H2O = L-glutamate + NH4(+). The enzyme catalyses UTP + NH4(+) + ATP = CTP + ADP + phosphate + 2 H(+). It functions in the pathway pyrimidine metabolism; CTP biosynthesis via de novo pathway; CTP from UDP: step 2/2. Its activity is regulated as follows. Allosterically activated by GTP, when glutamine is the substrate; GTP has no effect on the reaction when ammonia is the substrate. The allosteric effector GTP functions by stabilizing the protein conformation that binds the tetrahedral intermediate(s) formed during glutamine hydrolysis. Inhibited by the product CTP, via allosteric rather than competitive inhibition. In terms of biological role, catalyzes the ATP-dependent amination of UTP to CTP with either L-glutamine or ammonia as the source of nitrogen. Regulates intracellular CTP levels through interactions with the four ribonucleotide triphosphates. The protein is CTP synthase of Methylobacillus flagellatus (strain ATCC 51484 / DSM 6875 / VKM B-1610 / KT).